The primary structure comprises 1029 residues: Serine/threonine-protein kinase KSP1 (1029 aa).

In terms of domain architecture, Protein kinase spans 18–351 (YQKIEDISEG…TELQNLSEYT (334 aa)). ATP is bound by residues 27-35 (GSYGYVSLA) and Lys-47. Acidic residues predominate over residues 56–79 (GQYDGPQDDENDCDSSDCDDDEDT). Residues 56 to 105 (GQYDGPQDDENDCDSSDCDDDEDTKVDTDRHENENGNASSNNGSSREKKH) are disordered. A compositionally biased stretch (basic and acidic residues) spans 80 to 89 (KVDTDRHENE). Low complexity predominate over residues 90 to 99 (NGNASSNNGS). Residue Asp-207 is the Proton acceptor of the active site. Positions 377–397 (VPPSSAPVSLPTPISSSNKQH) are disordered. A phosphoserine mark is found at Ser-416 and Ser-419. A phosphothreonine mark is found at Thr-501, Thr-504, and Thr-526. Ser-529 bears the Phosphoserine mark. The interval 532–570 (HRYMEGFSNNNNKQYRQNRNYNNNNNNSNNNHGSNYNNF) is disordered. The segment covering 538-570 (FSNNNNKQYRQNRNYNNNNNNSNNNHGSNYNNF) has biased composition (low complexity). At Ser-646 the chain carries Phosphoserine. The tract at residues 732–824 (STNHNNNGNN…SDSKELEQER (93 aa)) is disordered. Positions 734–743 (NHNNNGNNNH) are enriched in low complexity. Residues 744-754 (IDTNSTTNQYH) are compositionally biased toward polar residues. The segment covering 813-824 (HSSDSKELEQER) has biased composition (basic and acidic residues). Phosphoserine occurs at positions 845 and 884. Residues 949-978 (EYEGESDKMAHGKMEGGDNESSSTSPDERQ) form a disordered region. A compositionally biased stretch (basic and acidic residues) spans 953–964 (ESDKMAHGKMEG). Thr-1005 is modified (phosphothreonine). A Phosphoserine modification is found at Ser-1014.

This sequence belongs to the protein kinase superfamily. Ser/Thr protein kinase family. CK2 subfamily. Post-translationally, phosphorylated by PKA in a TORC1-dependent manner. Phosphorylation at PKA consensus sites RRxS/T decreases upon rapamycin treatment.

The protein resides in the nucleus. The catalysed reaction is L-seryl-[protein] + ATP = O-phospho-L-seryl-[protein] + ADP + H(+). The enzyme catalyses L-threonyl-[protein] + ATP = O-phospho-L-threonyl-[protein] + ADP + H(+). May act on PRP20. In Saccharomyces cerevisiae (strain ATCC 204508 / S288c) (Baker's yeast), this protein is Serine/threonine-protein kinase KSP1 (KSP1).